Here is a 195-residue protein sequence, read N- to C-terminus: ATP-dependent Clp protease proteolytic subunit (195 aa).

Catalysis depends on Ser99, which acts as the Nucleophile. His124 is an active-site residue.

It belongs to the peptidase S14 family. In terms of assembly, fourteen ClpP subunits assemble into 2 heptameric rings which stack back to back to give a disk-like structure with a central cavity, resembling the structure of eukaryotic proteasomes.

It is found in the cytoplasm. The enzyme catalyses Hydrolysis of proteins to small peptides in the presence of ATP and magnesium. alpha-casein is the usual test substrate. In the absence of ATP, only oligopeptides shorter than five residues are hydrolyzed (such as succinyl-Leu-Tyr-|-NHMec, and Leu-Tyr-Leu-|-Tyr-Trp, in which cleavage of the -Tyr-|-Leu- and -Tyr-|-Trp bonds also occurs).. Functionally, cleaves peptides in various proteins in a process that requires ATP hydrolysis. Has a chymotrypsin-like activity. Plays a major role in the degradation of misfolded proteins. This chain is ATP-dependent Clp protease proteolytic subunit, found in Desulforamulus reducens (strain ATCC BAA-1160 / DSM 100696 / MI-1) (Desulfotomaculum reducens).